The primary structure comprises 417 residues: Serine hydroxymethyltransferase (417 aa).

Residues L121 and G125 to L127 each bind (6S)-5,6,7,8-tetrahydrofolate. Residue K229 is modified to N6-(pyridoxal phosphate)lysine. S355–F357 is a (6S)-5,6,7,8-tetrahydrofolate binding site.

It belongs to the SHMT family. Homodimer. Pyridoxal 5'-phosphate serves as cofactor.

The protein localises to the cytoplasm. The catalysed reaction is (6R)-5,10-methylene-5,6,7,8-tetrahydrofolate + glycine + H2O = (6S)-5,6,7,8-tetrahydrofolate + L-serine. Its pathway is one-carbon metabolism; tetrahydrofolate interconversion. The protein operates within amino-acid biosynthesis; glycine biosynthesis; glycine from L-serine: step 1/1. Functionally, catalyzes the reversible interconversion of serine and glycine with tetrahydrofolate (THF) serving as the one-carbon carrier. This reaction serves as the major source of one-carbon groups required for the biosynthesis of purines, thymidylate, methionine, and other important biomolecules. Also exhibits THF-independent aldolase activity toward beta-hydroxyamino acids, producing glycine and aldehydes, via a retro-aldol mechanism. In Shewanella amazonensis (strain ATCC BAA-1098 / SB2B), this protein is Serine hydroxymethyltransferase.